The following is a 273-amino-acid chain: MDKYAVFGNPIKHSKSPFIHTLFARQTMQDLEYSAIEAPINGFVESVTAFFSQQGKGCNVTVPFKEEAFQFADQLTERAKLAGAVNTLKKLDDGIILGDNTDGEGLVQDLLQYQVPLEDKHILLIGAGGAARGVILPLLKQNPASITLVNRTYEKAKQLAELFSPYGRIEAKEMSDINKGFDVIINSTSASLSGELPQIDPVIFSGGAISYDMMYGSGKTIFNQWALENDAYQAYDGLGMLVGQAAESFTVWRGLRPGSKQILRELRKNLEGM.

Shikimate is bound by residues 14–16 and threonine 61; that span reads SKS. Lysine 65 serves as the catalytic Proton acceptor. Glutamate 77 provides a ligand contact to NADP(+). The shikimate site is built by asparagine 86 and aspartate 102. NADP(+) is bound by residues 126 to 130, 150 to 155, and methionine 213; these read GAGGA and NRTYEK. Tyrosine 215 provides a ligand contact to shikimate. Glycine 237 is an NADP(+) binding site.

It belongs to the shikimate dehydrogenase family. Homodimer.

It catalyses the reaction shikimate + NADP(+) = 3-dehydroshikimate + NADPH + H(+). The protein operates within metabolic intermediate biosynthesis; chorismate biosynthesis; chorismate from D-erythrose 4-phosphate and phosphoenolpyruvate: step 4/7. In terms of biological role, involved in the biosynthesis of the chorismate, which leads to the biosynthesis of aromatic amino acids. Catalyzes the reversible NADPH linked reduction of 3-dehydroshikimate (DHSA) to yield shikimate (SA). This is Shikimate dehydrogenase (NADP(+)) from Aliivibrio fischeri (strain MJ11) (Vibrio fischeri).